The following is a 639-amino-acid chain: Kininogen-1 (639 aa).

A signal peptide spans 1–18; sequence MKLITILLLCSRLLPSLA. Residues 28-132 form the Cystatin kininogen-type 1 domain; that stretch reads CNDESLFQAV…TQICNITPGK (105 aa). Cystine bridges form between cysteine 28–cysteine 609, cysteine 83–cysteine 94, cysteine 107–cysteine 126, cysteine 142–cysteine 145, cysteine 206–cysteine 218, cysteine 229–cysteine 248, cysteine 264–cysteine 267, cysteine 328–cysteine 340, and cysteine 351–cysteine 370. Residue asparagine 82 is glycosylated (N-linked (GlcNAc...) asparagine). The region spanning 151–254 is the Cystatin kininogen-type 2 domain; sequence VDSPELGPVL…SDSCEFYPGD (104 aa). Asparagine 169 and asparagine 205 each carry an N-linked (GlcNAc...) asparagine glycan. Residues 273–376 enclose the Cystatin kininogen-type 3 domain; it reads VDSPELKEAL…TVKCKVLDMT (104 aa). An N-linked (GlcNAc...) asparagine glycan is attached at asparagine 294. Serine 332 carries the post-translational modification Phosphoserine. 2 disordered regions span residues 438–462 and 476–547; these read NHQG…GHGH and GYDH…LNPP. Over residues 482–502 the composition is skewed to basic residues; sequence PVGHGHGQRHGHGHGHGHGRD. The span at 503–519 shows a compositional bias: basic and acidic residues; it reads KHTNKDKNNVKHTDQRR. Residues 522-537 show a composition bias toward polar residues; it reads LTSSSEDNTTSTQIQG. Residue asparagine 529 is glycosylated (N-linked (GlcNAc...) asparagine).

In terms of processing, bradykinin is released from kininogen by plasma kallikrein. Post-translationally, phosphorylated by FAM20C in the extracellular medium. Bradykinin is inactivated by ACE, which removes the dipeptide Arg-Phe from its C-terminus. As to expression, plasma.

The protein localises to the secreted. The protein resides in the extracellular space. Its function is as follows. Kininogens are inhibitors of thiol proteases. HMW-kininogen plays an important role in blood coagulation by helping to position optimally prekallikrein and factor XI next to factor XII; HMW-kininogen inhibits the thrombin- and plasmin-induced aggregation of thrombocytes. LMW-kininogen inhibits the aggregation of thrombocytes. LMW-kininogen is in contrast to HMW-kininogen not involved in blood clotting. Functionally, the active peptide bradykinin is a potent vasodilatator that is released from HMW-kininogen shows a variety of physiological effects: (A) influence in smooth muscle contraction, (B) induction of hypotension, (C) natriuresis and diuresis, (D) decrease in blood glucose level, (E) it is a mediator of inflammation and causes (E1) increase in vascular permeability, (E2) stimulation of nociceptors (4E3) release of other mediators of inflammation (e.g. prostaglandins), (F) it has a cardioprotective effect (directly via bradykinin action, indirectly via endothelium-derived relaxing factor action). This is Kininogen-1 (Kng1) from Rattus norvegicus (Rat).